The primary structure comprises 213 residues: Imidazole glycerol phosphate synthase subunit HisH 1 (213 aa).

One can recognise a Glutamine amidotransferase type-1 domain in the interval 4 to 213 (TVAVIDYGMG…QNFVAWDGRW (210 aa)). The active-site Nucleophile is Cys82. Residues His191 and Glu193 contribute to the active site.

Heterodimer of HisH and HisF.

The protein localises to the cytoplasm. The catalysed reaction is 5-[(5-phospho-1-deoxy-D-ribulos-1-ylimino)methylamino]-1-(5-phospho-beta-D-ribosyl)imidazole-4-carboxamide + L-glutamine = D-erythro-1-(imidazol-4-yl)glycerol 3-phosphate + 5-amino-1-(5-phospho-beta-D-ribosyl)imidazole-4-carboxamide + L-glutamate + H(+). It carries out the reaction L-glutamine + H2O = L-glutamate + NH4(+). The protein operates within amino-acid biosynthesis; L-histidine biosynthesis; L-histidine from 5-phospho-alpha-D-ribose 1-diphosphate: step 5/9. In terms of biological role, IGPS catalyzes the conversion of PRFAR and glutamine to IGP, AICAR and glutamate. The HisH subunit provides the glutamine amidotransferase activity that produces the ammonia necessary to HisF for the synthesis of IGP and AICAR. The polypeptide is Imidazole glycerol phosphate synthase subunit HisH 1 (hisH1) (Pseudomonas aeruginosa (strain ATCC 15692 / DSM 22644 / CIP 104116 / JCM 14847 / LMG 12228 / 1C / PRS 101 / PAO1)).